The sequence spans 342 residues: GTPase Obg (342 aa).

Positions 1–159 constitute an Obg domain; it reads MKFIDEAKIY…RWIRLELKLL (159 aa). The region spanning 160-332 is the OBG-type G domain; sequence ADVGIIGLPN…LLYKIGEALK (173 aa). GTP-binding positions include 166 to 173, 191 to 195, 214 to 217, 284 to 287, and 313 to 315; these read GLPNVGKS, FTTLT, DIPG, NKTD, and SAA. Residues serine 173 and threonine 193 each coordinate Mg(2+).

This sequence belongs to the TRAFAC class OBG-HflX-like GTPase superfamily. OBG GTPase family. Monomer. Requires Mg(2+) as cofactor.

It is found in the cytoplasm. Its function is as follows. An essential GTPase which binds GTP, GDP and possibly (p)ppGpp with moderate affinity, with high nucleotide exchange rates and a fairly low GTP hydrolysis rate. Plays a role in control of the cell cycle, stress response, ribosome biogenesis and in those bacteria that undergo differentiation, in morphogenesis control. The polypeptide is GTPase Obg (Syntrophus aciditrophicus (strain SB)).